The following is a 324-amino-acid chain: Probable UDP-sugar transporter protein SLC35A4 (324 aa).

The Cytoplasmic portion of the chain corresponds to 1-18; sequence MSVEDGGLPGLGGPGQAR. The chain crosses the membrane as a helical span at residues 19–39; it reads WTLMLLLSTATYGAHAPLLAL. Topologically, residues 40 to 52 are lumenal; it reads CHVDGRVPFRPSS. The chain crosses the membrane as a helical span at residues 53-73; it reads AVLLTELTKLLLCALSLLVGW. The Cytoplasmic portion of the chain corresponds to 74–85; it reads QAWPPRTPPWRQ. A helical membrane pass occupies residues 86 to 106; the sequence is AAPFALSALLYGANNNLVIHL. The Lumenal portion of the chain corresponds to 107-140; that stretch reads QHYMDPSTYQVLSNLKIGSTALFYCLCLRRRLSA. The helical transmembrane segment at 141 to 161 threads the bilayer; the sequence is RQGLALLLLMAAGACYAAGGL. Residues 162–177 are Cytoplasmic-facing; it reads RDPGSPLPESPSTAAS. Residues 178-198 traverse the membrane as a helical segment; that stretch reads GPVPLHVTAPGLLLLLLYCLI. Topologically, residues 199–214 are lumenal; sequence SGLSSVYTELLLKRQR. The helical transmembrane segment at 215 to 235 threads the bilayer; it reads LPLALQNLFLYTFGVLLNLGL. The Cytoplasmic segment spans residues 236–248; that stretch reads HAGGGPGPGLLEG. A helical transmembrane segment spans residues 249-271; the sequence is FSGWAALVVLSQALNGLLMSAVM. Residues 272-279 lie on the Lumenal side of the membrane; the sequence is KHGSSITR. The helical transmembrane segment at 280–300 threads the bilayer; the sequence is LFVVSCSLVVNAVLSAALLRL. Residues 301–324 are Cytoplasmic-facing; the sequence is QLTAAFFLAALLIGLAVHLYYGSR.

The protein belongs to the nucleotide-sugar transporter family. SLC35A subfamily. As to quaternary structure, found in a complex with SLC35A2 and SLC35A3.

The protein localises to the golgi apparatus membrane. It catalyses the reaction CDP-L-ribitol(in) + CDP(out) = CDP-L-ribitol(out) + CDP(in). In terms of biological role, mediates the transport of CDP-ribitol. Does not exhibit CMP-sialic acid, UDP-galactose and UDP-N-acetylglucosamine transport activity. The polypeptide is Probable UDP-sugar transporter protein SLC35A4 (Sus scrofa (Pig)).